The following is a 214-amino-acid chain: Response regulator GacA (214 aa).

In terms of domain architecture, Response regulatory spans 3-119 (KVLVVDDHDL…EMVQAIRQVF (117 aa)). Asp54 is subject to 4-aspartylphosphate. The region spanning 143–208 (HDSPFDSLSE…ELALLAVRHG (66 aa)) is the HTH luxR-type domain. The H-T-H motif DNA-binding region spans 167–186 (VQSISDKLCLSPKTVNTYRY).

Functionally, positively controls the production of the autoinducer N-butyryl-homoserine lactone and the formation of the virulence factors pyocyanine, cyanide, and lipase. The polypeptide is Response regulator GacA (gacA) (Pseudomonas aeruginosa (strain ATCC 15692 / DSM 22644 / CIP 104116 / JCM 14847 / LMG 12228 / 1C / PRS 101 / PAO1)).